The sequence spans 89 residues: Large ribosomal subunit protein bL31B (89 aa).

This sequence belongs to the bacterial ribosomal protein bL31 family. Type B subfamily. Part of the 50S ribosomal subunit.

The polypeptide is Large ribosomal subunit protein bL31B (Haemophilus ducreyi (strain 35000HP / ATCC 700724)).